The following is a 178-amino-acid chain: Probable chorismate pyruvate-lyase (178 aa).

Arginine 72, leucine 110, and glutamate 169 together coordinate substrate.

Belongs to the UbiC family.

The protein resides in the cytoplasm. It catalyses the reaction chorismate = 4-hydroxybenzoate + pyruvate. Its pathway is cofactor biosynthesis; ubiquinone biosynthesis. Its function is as follows. Removes the pyruvyl group from chorismate, with concomitant aromatization of the ring, to provide 4-hydroxybenzoate (4HB) for the ubiquinone pathway. In Nitrosomonas europaea (strain ATCC 19718 / CIP 103999 / KCTC 2705 / NBRC 14298), this protein is Probable chorismate pyruvate-lyase.